We begin with the raw amino-acid sequence, 431 residues long: Protein prenyltransferase alpha subunit repeat-containing protein 1-B (431 aa).

PFTA repeat units lie at residues E85–P118, K120–L153, E178–N211, D217–T250, and E293–L326. Positions P363–R383 are disordered. A PFTA 6 repeat occupies S394–Y431.

This sequence belongs to the protein prenyltransferase subunit alpha family.

The protein is Protein prenyltransferase alpha subunit repeat-containing protein 1-B (ptar1-b) of Xenopus laevis (African clawed frog).